The primary structure comprises 305 residues: Tyrosine recombinase XerC (305 aa).

Residues 4–95 (TQIQELIIKW…AIKNFYKFLE (92 aa)) form the Core-binding (CB) domain. In terms of domain architecture, Tyr recombinase spans 116 to 298 (LLPKALSEEE…SIKHLETAYV (183 aa)). Active-site residues include Arg159, Lys182, His250, Arg253, and His276. The O-(3'-phospho-DNA)-tyrosine intermediate role is filled by Tyr285.

The protein belongs to the 'phage' integrase family. XerC subfamily. In terms of assembly, forms a cyclic heterotetrameric complex composed of two molecules of XerC and two molecules of XerD.

The protein resides in the cytoplasm. Site-specific tyrosine recombinase, which acts by catalyzing the cutting and rejoining of the recombining DNA molecules. The XerC-XerD complex is essential to convert dimers of the bacterial chromosome into monomers to permit their segregation at cell division. It also contributes to the segregational stability of plasmids. This chain is Tyrosine recombinase XerC, found in Rickettsia bellii (strain RML369-C).